We begin with the raw amino-acid sequence, 430 residues long: Histidine--tRNA ligase (430 aa).

This sequence belongs to the class-II aminoacyl-tRNA synthetase family. In terms of assembly, homodimer.

It localises to the cytoplasm. The enzyme catalyses tRNA(His) + L-histidine + ATP = L-histidyl-tRNA(His) + AMP + diphosphate + H(+). This Lactococcus lactis subsp. cremoris (strain SK11) protein is Histidine--tRNA ligase.